The primary structure comprises 160 residues: Major strawberry allergen Fra a 1.07 (160 aa).

The protein belongs to the BetVI family. In terms of processing, phosphorylated in vivo. Phosphorylation prevents its activity as ribonuclease. Highly expressed in roots. Expressed a low levels in ripe red fruits.

Possesses ribonuclease activity in vitro. This Fragaria ananassa (Strawberry) protein is Major strawberry allergen Fra a 1.07.